We begin with the raw amino-acid sequence, 187 residues long: Peptidoglycan-recognition protein 3 (187 aa).

The signal sequence occupies residues 1 to 19; sequence MKAFLVALLISIELALVFA. 2 disulfides stabilise this stretch: Cys21–Cys144 and Cys58–Cys64. In terms of domain architecture, N-acetylmuramoyl-L-alanine amidase spans 43-170; that stretch reads KPLKYVIINH…RTIRQTNSPG (128 aa). Asn51 carries an N-linked (GlcNAc...) asparagine glycan.

The protein belongs to the N-acetylmuramoyl-L-alanine amidase 2 family.

Its subcellular location is the secreted. Its function is as follows. Peptidoglycan-recognition protein probably involved in innate immunity by binding to peptidoglycans (PGN) of bacteria and activating the prophenoloxidase (proPO) cascade immune response. Binds to 1,3-beta-D-glucan and PGN. This is Peptidoglycan-recognition protein 3 (PGRP-3) from Holotrichia diomphalia (Korean black chafer).